We begin with the raw amino-acid sequence, 211 residues long: Thiamine-phosphate synthase (211 aa).

4-amino-2-methyl-5-(diphosphooxymethyl)pyrimidine is bound by residues 38–42 and asparagine 70; that span reads QLREK. Aspartate 71 and aspartate 90 together coordinate Mg(2+). Residue serine 109 coordinates 4-amino-2-methyl-5-(diphosphooxymethyl)pyrimidine. 135-137 lines the 2-[(2R,5Z)-2-carboxy-4-methylthiazol-5(2H)-ylidene]ethyl phosphate pocket; sequence TST. Lysine 138 is a binding site for 4-amino-2-methyl-5-(diphosphooxymethyl)pyrimidine. Residues glycine 165 and 185-186 contribute to the 2-[(2R,5Z)-2-carboxy-4-methylthiazol-5(2H)-ylidene]ethyl phosphate site; that span reads IS.

It belongs to the thiamine-phosphate synthase family. Mg(2+) is required as a cofactor.

The catalysed reaction is 2-[(2R,5Z)-2-carboxy-4-methylthiazol-5(2H)-ylidene]ethyl phosphate + 4-amino-2-methyl-5-(diphosphooxymethyl)pyrimidine + 2 H(+) = thiamine phosphate + CO2 + diphosphate. It catalyses the reaction 2-(2-carboxy-4-methylthiazol-5-yl)ethyl phosphate + 4-amino-2-methyl-5-(diphosphooxymethyl)pyrimidine + 2 H(+) = thiamine phosphate + CO2 + diphosphate. It carries out the reaction 4-methyl-5-(2-phosphooxyethyl)-thiazole + 4-amino-2-methyl-5-(diphosphooxymethyl)pyrimidine + H(+) = thiamine phosphate + diphosphate. Its pathway is cofactor biosynthesis; thiamine diphosphate biosynthesis; thiamine phosphate from 4-amino-2-methyl-5-diphosphomethylpyrimidine and 4-methyl-5-(2-phosphoethyl)-thiazole: step 1/1. Condenses 4-methyl-5-(beta-hydroxyethyl)thiazole monophosphate (THZ-P) and 2-methyl-4-amino-5-hydroxymethyl pyrimidine pyrophosphate (HMP-PP) to form thiamine monophosphate (TMP). This Clostridium acetobutylicum (strain ATCC 824 / DSM 792 / JCM 1419 / IAM 19013 / LMG 5710 / NBRC 13948 / NRRL B-527 / VKM B-1787 / 2291 / W) protein is Thiamine-phosphate synthase.